The sequence spans 219 residues: Kynurenine formamidase (219 aa).

Tryptophan 28 lines the substrate pocket. The Zn(2+) site is built by histidine 58, histidine 62, and aspartate 64. Histidine 68 serves as the catalytic Proton donor/acceptor. Positions 170 and 182 each coordinate Zn(2+).

The protein belongs to the Cyclase 1 superfamily. KynB family. In terms of assembly, homodimer. It depends on Zn(2+) as a cofactor.

It carries out the reaction N-formyl-L-kynurenine + H2O = L-kynurenine + formate + H(+). The protein operates within amino-acid degradation; L-tryptophan degradation via kynurenine pathway; L-kynurenine from L-tryptophan: step 2/2. Functionally, catalyzes the hydrolysis of N-formyl-L-kynurenine to L-kynurenine, the second step in the kynurenine pathway of tryptophan degradation. The polypeptide is Kynurenine formamidase (Cupriavidus pinatubonensis (strain JMP 134 / LMG 1197) (Cupriavidus necator (strain JMP 134))).